Here is an 825-residue protein sequence, read N- to C-terminus: MFLEVADLKDGLWVWKVVFLQVCIEASGWGAEVRDSCGCGDSSSHQTDDPATALALHVACHSFKGQLVQQTLLLGTRPRVWVNNIPQEGPSLPLRQWLLPQCPSLNRSGSAMGTGWGLSGLSPTALSRDGYETETPFSPEGAFPGGGPAEEEGVPRPRAPPEPPDPGAPRPPPDPGPLPLPGSQEKPTFVVQVSTEQLLMSTGGCDKEPPRGQGVDTRGDRTQEGGEKPREQREGPRPEQGPDIPGQQEESPQQEPSSERGDSVGEREARSPGHEGEGGGEWPGISGERRESPGEWGADVPRGRGEGAGEWGSDVPKDRGEGGREWGPEAAQEHGEAARDWTSESPRTLGEDARDWGSSSRDAAGSSPCALRGSLAPERLGDGPWPAWPSPQEREPGPRDRVESPREWGGTESPRGWEAGPREWGPSPGGRGDGPRRRPRKRRGRKGRMGRQLETTATSASATGGPAEEAGASAPEGQAGGGPRGRARGPRQQARRRHGPQRRRGPPQAGEEGPGDATLVLGLGTTSGEQRADQSQTLPALAGAPTAHAHAVPGPGPAAATLGGRGRRGSWRGGRRGGGAGASGGGRGGRGRGRGGRRGSGLSGTREDAGSPSARRGEQRRRGHGPPAAGAAQVSTRGRRARGQRTGEEAQDGLLPRGRDRLPLRPGDSNQRVERPGHPRGGHGAINAPSAPDASPPHHPRRWVSQQRQRLWRQFRVGGGFPPPPPTRPPPVLLPLLRLTCAGDPGASRPGSRRPARRPRGELTPQRPSPFAPQEEGLRAESCVDDGAIAPDTDTASGEVPEAGPSLSSTMCQMGRPRPSPKSPR.

The tract at residues 126-825 (LSRDGYETET…RPRPSPKSPR (700 aa)) is disordered. A compositionally biased stretch (pro residues) spans 157-180 (PRAPPEPPDPGAPRPPPDPGPLPL). Over residues 191–200 (VQVSTEQLLM) the composition is skewed to polar residues. A compositionally biased stretch (basic and acidic residues) spans 217–237 (TRGDRTQEGGEKPREQREGPR). A compositionally biased stretch (low complexity) spans 247-256 (QQEESPQQEP). Basic and acidic residues-rich tracts occupy residues 257 to 277 (SSER…HEGE), 315 to 342 (VPKD…RDWT), and 392 to 406 (QERE…ESPR). Residues 437–449 (RRPRKRRGRKGRM) are compositionally biased toward basic residues. Over residues 455 to 477 (TTATSASATGGPAEEAGASAPEG) the composition is skewed to low complexity. Basic residues predominate over residues 485-505 (GRARGPRQQARRRHGPQRRRG). The span at 524–536 (GTTSGEQRADQSQ) shows a compositional bias: polar residues. Residues 537-562 (TLPALAGAPTAHAHAVPGPGPAAATL) are compositionally biased toward low complexity. Over residues 565 to 575 (RGRRGSWRGGR) the composition is skewed to basic residues. The span at 576–588 (RGGGAGASGGGRG) shows a compositional bias: gly residues. Residues 721-733 (FPPPPPTRPPPVL) are compositionally biased toward pro residues. Over residues 734-750 (LPLLRLTCAGDPGASRP) the composition is skewed to low complexity.

As to expression, expressed in neurons.

It is found in the nucleus. Its function is as follows. Might have DNA-binding ability. In Rattus norvegicus (Rat), this protein is 5E5 antigen.